The chain runs to 438 residues: Cysteine--tRNA ligase (438 aa).

Position 28 (cysteine 28) interacts with Zn(2+). The 'HIGH' region signature appears at 30–40 (PTVYNHLHLGN). Residues cysteine 207, histidine 232, and glutamate 236 each contribute to the Zn(2+) site. The 'KMSKS' region motif lies at 264–268 (KMSKS). Residue lysine 267 coordinates ATP.

It belongs to the class-I aminoacyl-tRNA synthetase family. Monomer. The cofactor is Zn(2+).

Its subcellular location is the cytoplasm. The catalysed reaction is tRNA(Cys) + L-cysteine + ATP = L-cysteinyl-tRNA(Cys) + AMP + diphosphate. The chain is Cysteine--tRNA ligase from Aster yellows witches'-broom phytoplasma (strain AYWB).